We begin with the raw amino-acid sequence, 391 residues long: DNA primase small subunit PriS (391 aa).

Residues aspartate 98, aspartate 100, and aspartate 294 contribute to the active site.

It belongs to the eukaryotic-type primase small subunit family. Heterodimer of a small subunit (PriS) and a large subunit (PriL). The cofactor is Mg(2+). Mn(2+) is required as a cofactor.

In terms of biological role, catalytic subunit of DNA primase, an RNA polymerase that catalyzes the synthesis of short RNA molecules used as primers for DNA polymerase during DNA replication. The small subunit contains the primase catalytic core and has DNA synthesis activity on its own. Binding to the large subunit stabilizes and modulates the activity, increasing the rate of DNA synthesis while decreasing the length of the DNA fragments, and conferring RNA synthesis capability. The DNA polymerase activity may enable DNA primase to also catalyze primer extension after primer synthesis. May also play a role in DNA repair. This is DNA primase small subunit PriS from Halobacterium salinarum (strain ATCC 29341 / DSM 671 / R1).